The following is a 196-amino-acid chain: DNA replication complex GINS protein PSF1 (196 aa).

Belongs to the GINS1/PSF1 family. In terms of assembly, component of the GINS complex which is a heterotetramer of GINS1, GINS2, GINS3 and GINS4. Forms a stable subcomplex with GINS4. GINS complex interacts with DNA primase in vitro. Component of the CMG helicase complex, a hexameric ring of related MCM2-7 subunits stabilized by CDC45 and the tetrameric GINS complex.

It localises to the nucleus. It is found in the chromosome. Its function is as follows. Required for correct functioning of the GINS complex, a complex that plays an essential role in the initiation of DNA replication, and progression of DNA replication forks. GINS complex is a core component of CDC45-MCM-GINS (CMG) helicase, the molecular machine that unwinds template DNA during replication, and around which the replisome is built. The sequence is that of DNA replication complex GINS protein PSF1 (Gins1) from Mus musculus (Mouse).